A 503-amino-acid chain; its full sequence is MEEFQGYLELYRSQQHDFLYPLIFREYIYALAHDRGLNRSVLLDNVGYDKKSSLLIIKRLISRMYQQNHFIISLNDSNQNKFLGYNKNLYSQMISEGFAVIVEIPFSLRLVSSLEETETVKSYNLRSIHSIFPFFEDKFPHLNYASDVLIPYPIHLEILVQTLRYCVKDPSSLHLLRLFLHEYYNWNTLITPKKSIFAKSNQRLFLLLYNSYVCEYESILLFLRNQSNHLRLTSSGILFERIRFYEKIKYPVEEVFANDFPATLWFFKDPFIQYVRYQGKSILASKDTPLLMNKWKYYLVHFWQCHFYVWSQPGRIHINQLSKHSFDFLGYLSSIRPNISVVRSQLLENSFLMDNAMKKLDTLFPIIPMIGSLAKVKFCNTSGHPISKSSWADSSDSDIIDRFVRIGGNLSHYYSGSSKKKSLYRIKYILRLSCVKTLARKHKSTVRTFLKRLGPKLLDEFFTEEEQIFSLLFPRTSSTLKRFYRGRIWYLDILCINDLVNHE.

This sequence belongs to the intron maturase 2 family. MatK subfamily.

The protein localises to the plastid. Its subcellular location is the chloroplast. Usually encoded in the trnK tRNA gene intron. Probably assists in splicing its own and other chloroplast group II introns. This is Maturase K from Rosa gigantea (Giant tea rose).